The sequence spans 818 residues: Myosin-A (818 aa).

Residue Ser-19 is modified to Phosphoserine; by PKG. One can recognise a Myosin motor domain in the interval Met-97–Arg-771. Residue Gly-191–Thr-198 participates in ATP binding. The tract at residues Pro-661–Glu-671 is actin-binding. The tail stretch occupies residues Lys-773–Gln-818.

This sequence belongs to the TRAFAC class myosin-kinesin ATPase superfamily. Myosin family. In terms of assembly, component of the glideosome complex composed of GAP50, GAP45, MTIP and MyoA; the complex is formed during the late schizont stage and in merozoites. MyoA, MTIP and GAP45 probably form an initial complex in the cytoplasm which is then recruited to the outer face of the inner membrane complex via the interaction with GAP50. Interacts with ACT1.

The protein localises to the cell membrane. In terms of biological role, myosins are actin-based motor molecules with ATPase activity. Unconventional myosins serve in intracellular movements. Their highly divergent tails are presumed to bind to membranous compartments, which would be moved relative to actin filaments. The polypeptide is Myosin-A (Plasmodium falciparum (isolate 3D7)).